Reading from the N-terminus, the 260-residue chain is Octanoyltransferase (260 aa).

Residues 42-241 form the BPL/LPL catalytic domain; that stretch reads PQVPDGLLLL…SFCQVFGLQA (200 aa). Substrate-binding positions include 97–104, 172–174, and 185–187; these read RGGEVTYH, AIG, and GFA. The active-site Acyl-thioester intermediate is Cys-203.

This sequence belongs to the LipB family.

It localises to the cytoplasm. It carries out the reaction octanoyl-[ACP] + L-lysyl-[protein] = N(6)-octanoyl-L-lysyl-[protein] + holo-[ACP] + H(+). Its pathway is protein modification; protein lipoylation via endogenous pathway; protein N(6)-(lipoyl)lysine from octanoyl-[acyl-carrier-protein]: step 1/2. Catalyzes the transfer of endogenously produced octanoic acid from octanoyl-acyl-carrier-protein onto the lipoyl domains of lipoate-dependent enzymes. Lipoyl-ACP can also act as a substrate although octanoyl-ACP is likely to be the physiological substrate. In Synechococcus sp. (strain JA-3-3Ab) (Cyanobacteria bacterium Yellowstone A-Prime), this protein is Octanoyltransferase.